We begin with the raw amino-acid sequence, 789 residues long: Fibrinogen alpha chain (789 aa).

Residues 1–19 (MLSLRVTCLILSVASTVWT) form the signal peptide. Phosphoserine is present on Ser-46. Residues 69 to 554 (CRMKGLIDEA…GRARARPTRD (486 aa)) adopt a coiled-coil conformation. Basic and acidic residues-rich tracts occupy residues 263-287 (ERPG…RGDF) and 384-396 (KGDK…KEKV). The interval 263–420 (ERPGKDGGSR…TITKTVTGPD (158 aa)) is disordered. The segment covering 397–416 (TSSGTSTTHRSCSKTITKTV) has biased composition (polar residues). Cys-408 and Cys-438 form a disulfide bridge. Ser-447 bears the Phosphoserine mark. Pro-504 bears the 4-hydroxyproline; by P4HA1 mark. A compositionally biased stretch (basic and acidic residues) spans 526–541 (ADEAGSEAHREGETRN). A disordered region spans residues 526 to 555 (ADEAGSEAHREGETRNTKRGRARARPTRDC). Residues 546–787 (RARARPTRDC…AVRMKIRPLV (242 aa)) form the Fibrinogen C-terminal domain. N-linked (GlcNAc...) asparagine glycosylation occurs at Asn-609. Positions 714, 716, 718, and 720 each coordinate Ca(2+). A disulfide bridge links Cys-722 with Cys-735.

Heterohexamer; disulfide linked. Contains 2 sets of 3 non-identical chains (alpha, beta and gamma). The 2 heterotrimers are in head to head conformation with the N-termini in a small central domain. In terms of processing, conversion of fibrinogen to fibrin is triggered by thrombin, which cleaves fibrinopeptides A and B from alpha and beta chains, and thus exposes the N-terminal polymerization sites responsible for the formation of the soft clot. The soft clot is converted into the hard clot by factor XIIIA which catalyzes the epsilon-(gamma-glutamyl)lysine cross-linking between gamma chains (stronger) and between alpha chains (weaker) of different monomers. Forms F13A-mediated cross-links between a glutamine and the epsilon-amino group of a lysine residue, forming fibronectin-fibrinogen heteropolymers. Post-translationally, phosphorylated by FAM20C in the extracellular medium. In terms of tissue distribution, expressed in liver.

Its subcellular location is the secreted. Functionally, cleaved by the protease thrombin to yield monomers which, together with fibrinogen beta (FGB) and fibrinogen gamma (FGG), polymerize to form an insoluble fibrin matrix. Fibrin has a major function in hemostasis as one of the primary components of blood clots. In addition, functions during the early stages of wound repair to stabilize the lesion and guide cell migration during re-epithelialization. Was originally thought to be essential for platelet aggregation, based on in vitro studies using anticoagulated blood. However, subsequent studies have shown that it is not absolutely required for thrombus formation in vivo. Enhances expression of SELP in activated platelets via an ITGB3-dependent pathway. Maternal fibrinogen is essential for successful pregnancy. Fibrin deposition is also associated with infection, where it protects against IFNG-mediated hemorrhage. May also facilitate the immune response via both innate and T-cell mediated pathways. The protein is Fibrinogen alpha chain of Mus musculus (Mouse).